A 904-amino-acid polypeptide reads, in one-letter code: Alanine--tRNA ligase (904 aa).

Zn(2+) is bound by residues His600, His604, Cys704, and His708.

Belongs to the class-II aminoacyl-tRNA synthetase family. It depends on Zn(2+) as a cofactor.

It localises to the cytoplasm. The enzyme catalyses tRNA(Ala) + L-alanine + ATP = L-alanyl-tRNA(Ala) + AMP + diphosphate. In terms of biological role, catalyzes the attachment of alanine to tRNA(Ala) in a two-step reaction: alanine is first activated by ATP to form Ala-AMP and then transferred to the acceptor end of tRNA(Ala). Also edits incorrectly charged Ser-tRNA(Ala) and Gly-tRNA(Ala) via its editing domain. The chain is Alanine--tRNA ligase from Metallosphaera sedula (strain ATCC 51363 / DSM 5348 / JCM 9185 / NBRC 15509 / TH2).